The sequence spans 338 residues: Heat-inducible transcription repressor HrcA (338 aa).

The protein belongs to the HrcA family.

In terms of biological role, negative regulator of class I heat shock genes (grpE-dnaK-dnaJ and groELS operons). Prevents heat-shock induction of these operons. This chain is Heat-inducible transcription repressor HrcA, found in Bacillus anthracis (strain A0248).